Reading from the N-terminus, the 168-residue chain is Shikimate kinase (168 aa).

Glycine 11 to threonine 16 is an ATP binding site. Residue threonine 15 coordinates Mg(2+). Residues aspartate 33, arginine 57, and glycine 78 each coordinate substrate. An ATP-binding site is contributed by arginine 118. Arginine 136 contributes to the substrate binding site. Arginine 153 provides a ligand contact to ATP.

This sequence belongs to the shikimate kinase family. Monomer. The cofactor is Mg(2+).

The protein resides in the cytoplasm. The enzyme catalyses shikimate + ATP = 3-phosphoshikimate + ADP + H(+). Its pathway is metabolic intermediate biosynthesis; chorismate biosynthesis; chorismate from D-erythrose 4-phosphate and phosphoenolpyruvate: step 5/7. In terms of biological role, catalyzes the specific phosphorylation of the 3-hydroxyl group of shikimic acid using ATP as a cosubstrate. This Enterococcus faecalis (strain ATCC 700802 / V583) protein is Shikimate kinase.